Consider the following 359-residue polypeptide: N-acetyl-gamma-glutamyl-phosphate reductase (359 aa).

Residue Cys-162 is part of the active site.

The protein belongs to the NAGSA dehydrogenase family. Type 1 subfamily.

It is found in the cytoplasm. The catalysed reaction is N-acetyl-L-glutamate 5-semialdehyde + phosphate + NADP(+) = N-acetyl-L-glutamyl 5-phosphate + NADPH + H(+). Its pathway is amino-acid biosynthesis; L-arginine biosynthesis; N(2)-acetyl-L-ornithine from L-glutamate: step 3/4. In terms of biological role, catalyzes the NADPH-dependent reduction of N-acetyl-5-glutamyl phosphate to yield N-acetyl-L-glutamate 5-semialdehyde. The sequence is that of N-acetyl-gamma-glutamyl-phosphate reductase from Prochlorococcus marinus (strain NATL1A).